We begin with the raw amino-acid sequence, 438 residues long: Acid phosphatase type 7 (438 aa).

An N-terminal signal peptide occupies residues 1-23; sequence MSPFLGGWLFFCMLLPFSPGVQG. Fe cation contacts are provided by Asp-141, Asp-170, and Tyr-173. Asp-170 lines the Zn(2+) pocket. Asn-205 lines the Zn(2+) pocket. Residue Asn-211 is glycosylated (N-linked (GlcNAc...) asparagine). Zn(2+)-binding residues include His-286 and His-333. His-335 contacts Fe cation. N-linked (GlcNAc...) asparagine glycosylation is found at Asn-350 and Asn-404.

This sequence belongs to the metallophosphoesterase superfamily. Purple acid phosphatase family. Requires Fe cation as cofactor. Zn(2+) is required as a cofactor.

The protein localises to the secreted. The catalysed reaction is a phosphate monoester + H2O = an alcohol + phosphate. This is Acid phosphatase type 7 from Mus musculus (Mouse).